The primary structure comprises 458 residues: Mannan endo-1,6-alpha-mannosidase DFG5 (458 aa).

Residues 1–26 (MIVNISAKMILSICFTFLSFFKATHA) form the signal peptide. 9 N-linked (GlcNAc...) asparagine glycosylation sites follow: Asn89, Asn114, Asn138, Asn208, Asn231, Asn245, Asn270, Asn273, and Asn417. The disordered stretch occupies residues 399–418 (PYKEDNGGTSKGDANAGMNS). Gly437 carries GPI-anchor amidated glycine lipidation. Residues 438 to 458 (AAIITAVILSVLTGGAVWMLF) constitute a propeptide, removed in mature form.

This sequence belongs to the glycosyl hydrolase 76 family. Post-translationally, N-glycosylated.

It localises to the cell membrane. The enzyme catalyses Random hydrolysis of (1-&gt;6)-alpha-D-mannosidic linkages in unbranched (1-&gt;6)-mannans.. Required for normal synthesis of the cell wall. This Saccharomyces cerevisiae (strain ATCC 204508 / S288c) (Baker's yeast) protein is Mannan endo-1,6-alpha-mannosidase DFG5 (DFG5).